The following is a 262-amino-acid chain: ABSCISIC ACID-INSENSITIVE 5-like protein 3 (262 aa).

Residues S21, S43, and S66 each carry the phosphoserine modification. T104 carries the post-translational modification Phosphothreonine. Residues 190 to 253 (VERRQKRMIK…SEPPPDPKWK (64 aa)) enclose the bZIP domain. Residues 192–211 (RRQKRMIKNRESAARSRARK) form a basic motif region. The interval 218–232 (LEIKVSRLEEENEKL) is leucine-zipper. The span at 239 to 252 (EKILPSEPPPDPKW) shows a compositional bias: basic and acidic residues. The disordered stretch occupies residues 239 to 262 (EKILPSEPPPDPKWKLRRTNSASL).

It belongs to the bZIP family. ABI5 subfamily. In terms of assembly, DNA-binding heterodimer with ABI5/DPBF1, DPBF2 or AREB3/DPBF3. Interacts with the AFP proteins AFP2, AFP3 and AFP4. As to expression, predominantly expressed in seeds.

The protein localises to the nucleus. Functionally, binds to the embryo specification element and the ABA-responsive element (ABRE) of the Dc3 gene promoter and to the ABRE of the Em1 gene promoter. Could participate in abscisic acid-regulated gene expression during seed development. The polypeptide is ABSCISIC ACID-INSENSITIVE 5-like protein 3 (DPBF4) (Arabidopsis thaliana (Mouse-ear cress)).